Here is a 352-residue protein sequence, read N- to C-terminus: PDZ and LIM domain protein 2 (352 aa).

In terms of domain architecture, PDZ spans Met1–Gln84. Disordered regions lie at residues Ser67–Leu97 and Tyr111–Ala149. Positions Asp81–Ser95 are enriched in polar residues. The segment covering Tyr111 to Pro135 has biased composition (low complexity). Ser124 carries the post-translational modification Phosphoserine. Position 126 is a phosphothreonine (Thr126). Phosphoserine is present on residues Ser127, Ser129, Ser134, Ser137, Ser143, Ser161, Ser197, Ser203, Ser213, and Ser266. The segment at Leu170–Ser213 is disordered. Positions His284–Ala344 constitute an LIM zinc-binding domain.

As to quaternary structure, interacts with alpha-actinins ACTN1 and ACTN4, FLNA and MYH9. Interacts (via LIM zinc-binding domain) with MKRN2.

Its subcellular location is the cytoplasm. The protein localises to the nucleus. It is found in the cytoskeleton. In terms of biological role, probable adapter protein located at the actin cytoskeleton that promotes cell attachment. Necessary for the migratory capacity of epithelial cells. Overexpression enhances cell adhesion to collagen and fibronectin and suppresses anchorage independent growth. May contribute to tumor cell migratory capacity. The chain is PDZ and LIM domain protein 2 (PDLIM2) from Homo sapiens (Human).